A 968-amino-acid polypeptide reads, in one-letter code: RNA polymerase-associated protein RapA (968 aa).

The Helicase ATP-binding domain occupies 163-332 (EVGRRYAPRV…FARLRLLDPD (170 aa)). 176 to 183 (DEVGLGKT) lines the ATP pocket. A DEAH box motif is present at residues 278 to 281 (DEAH). The Helicase C-terminal domain maps to 491 to 655 (RVDWLIEFLK…EFAEDLLNVL (165 aa)).

It belongs to the SNF2/RAD54 helicase family. RapA subfamily. Interacts with the RNAP. Has a higher affinity for the core RNAP than for the holoenzyme. Its ATPase activity is stimulated by binding to RNAP.

Its function is as follows. Transcription regulator that activates transcription by stimulating RNA polymerase (RNAP) recycling in case of stress conditions such as supercoiled DNA or high salt concentrations. Probably acts by releasing the RNAP, when it is trapped or immobilized on tightly supercoiled DNA. Does not activate transcription on linear DNA. Probably not involved in DNA repair. This chain is RNA polymerase-associated protein RapA, found in Shewanella baltica (strain OS155 / ATCC BAA-1091).